A 421-amino-acid chain; its full sequence is MQDSIEQYMQKVGQQARDASRVLTSASTSLKNHALSAIYTALENNQAAILAANQIDMEKGRSNQLDSALLDRLELTPARFKGMLQGLKDVIVLVDPIGEITDLAYRPTGIQIGKMRVPLGVVGMIYESRPNVTLEAASLAIKSGNAIILRGGSEALESNKAIAEAVKHGLKVAGLPEHSVQVIETSDRGAVGHLITMAEYVDVIVPRGGKSLIERVTNEARIPVIKHLDGNCHVFVEAQADLQKALPITLNAKTHRYGVCNAMETLLVDEKIAEVFLPHIAELYAEKQVELRGCPETRRILGSSVKPATEEDWYTEYLGPILAVKVVSGIDEAIDHINKYGSHHTDAIVTENYTLARQFLARVDSSSVVVNASTRFADGFEYGLGAEIGISTDKIHARGPVGLEGLTSQKWIVLGDGQIRQ.

This sequence belongs to the gamma-glutamyl phosphate reductase family.

Its subcellular location is the cytoplasm. It carries out the reaction L-glutamate 5-semialdehyde + phosphate + NADP(+) = L-glutamyl 5-phosphate + NADPH + H(+). It functions in the pathway amino-acid biosynthesis; L-proline biosynthesis; L-glutamate 5-semialdehyde from L-glutamate: step 2/2. Functionally, catalyzes the NADPH-dependent reduction of L-glutamate 5-phosphate into L-glutamate 5-semialdehyde and phosphate. The product spontaneously undergoes cyclization to form 1-pyrroline-5-carboxylate. The protein is Gamma-glutamyl phosphate reductase of Acinetobacter baumannii (strain ATCC 17978 / DSM 105126 / CIP 53.77 / LMG 1025 / NCDC KC755 / 5377).